A 604-amino-acid polypeptide reads, in one-letter code: UvrABC system protein C (604 aa).

One can recognise a GIY-YIG domain in the interval 13 to 92 (ASPGVYLMKD…IKKYHPKYNV (80 aa)). Residues 205–240 (SEIVQDLEKSIEKASKEQKFEQAGMYYRTLKLIQQA) enclose the UVR domain.

Belongs to the UvrC family. Interacts with UvrB in an incision complex.

It is found in the cytoplasm. The UvrABC repair system catalyzes the recognition and processing of DNA lesions. UvrC both incises the 5' and 3' sides of the lesion. The N-terminal half is responsible for the 3' incision and the C-terminal half is responsible for the 5' incision. The chain is UvrABC system protein C from Chlamydia abortus (strain DSM 27085 / S26/3) (Chlamydophila abortus).